The sequence spans 311 residues: Malate dehydrogenase (311 aa).

Residues 7 to 13 (GAAGGIG) and Asp-34 each bind NAD(+). Positions 81 and 87 each coordinate substrate. NAD(+) is bound by residues Asn-94 and 117–119 (ITN). Substrate-binding residues include Asn-119 and Arg-153. Catalysis depends on His-177, which acts as the Proton acceptor. Residue Met-227 coordinates NAD(+).

It belongs to the LDH/MDH superfamily. MDH type 1 family. As to quaternary structure, homodimer.

It catalyses the reaction (S)-malate + NAD(+) = oxaloacetate + NADH + H(+). Catalyzes the reversible oxidation of malate to oxaloacetate. The polypeptide is Malate dehydrogenase (Haemophilus influenzae (strain PittEE)).